Consider the following 680-residue polypeptide: Fermitin family homolog 2 (680 aa).

An interaction with membranes containing phosphatidylinositol phosphate region spans residues 40–81 (HIGGVMLKLVEKLDVKKDWSDHALWWEKKRTWLLKTHWTLDK). Positions 141 to 162 (LKKPRDPTKKKKKKLDDQSEDE) are disordered. 4 positions are modified to phosphoserine: S159, S181, S339, and S351. In terms of domain architecture, FERM spans 189 to 661 (MTPTYDAHDG…GYIFLSTRAK (473 aa)). Residues 380–476 (KVFKPKKLTL…WMAACRLASK (97 aa)) enclose the PH domain. K383 lines the a 1,2-diacyl-sn-glycero-3-phospho-(1D-myo-inositol-3,4,5-trisphosphate) pocket. The residue at position 666 (S666) is a Phosphoserine.

Belongs to the kindlin family. As to quaternary structure, interacts with ITGB1; the interaction is inhibited in presence of ITGB1BP1. Interacts with FBLIM1. Interacts with active, unphosphorylated CTNNB1. Identified in a complex with CTNNB1 and TCF7L2/TCF4. Interacts with ILK, ITGB1 and ITGB3. As to expression, detected in adult heart muscle (at protein level). Detected in heart, skeletal muscle and testis.

Its subcellular location is the cytoplasm. The protein localises to the cell cortex. It localises to the cytoskeleton. It is found in the stress fiber. The protein resides in the cell junction. Its subcellular location is the focal adhesion. The protein localises to the membrane. It localises to the cell projection. It is found in the lamellipodium membrane. The protein resides in the nucleus. Its subcellular location is the myofibril. The protein localises to the sarcomere. It localises to the i band. It is found in the cell surface. Its function is as follows. Scaffolding protein that enhances integrin activation mediated by TLN1 and/or TLN2, but activates integrins only weakly by itself. Binds to membranes enriched in phosphoinositides. Enhances integrin-mediated cell adhesion onto the extracellular matrix and cell spreading; this requires both its ability to interact with integrins and with phospholipid membranes. Required for the assembly of focal adhesions. Participates in the connection between extracellular matrix adhesion sites and the actin cytoskeleton and also in the orchestration of actin assembly and cell shape modulation. Recruits FBLIM1 to focal adhesions. Plays a role in the TGFB1 and integrin signaling pathways. Stabilizes active CTNNB1 and plays a role in the regulation of transcription mediated by CTNNB1 and TCF7L2/TCF4 and in Wnt signaling. The chain is Fermitin family homolog 2 (Fermt2) from Mus musculus (Mouse).